The primary structure comprises 477 residues: M-phase inducer phosphatase 3 (477 aa).

The interval 1-20 is disordered; the sequence is MSAEFFSSKREEGSLASGPS. Serine 2 bears the N-acetylserine mark. Residues serine 20 and serine 38 each carry the phosphoserine modification. Phosphothreonine; by CDK1 is present on threonine 48. Residues serine 58, serine 62, and serine 65 each carry the phosphoserine modification. Residue threonine 68 is modified to Phosphothreonine; by CDK1. Residue serine 123 is modified to Phosphoserine; by CDK1. Phosphoserine is present on serine 130. Threonine 131 is modified (phosphothreonine). Position 169 is a phosphoserine; by CDK1 (serine 169). A phosphoserine; by PLK3 mark is found at serine 192 and serine 199. A Phosphoserine; by CDK1 modification is found at serine 218. A Phosphoserine; by CHEK1, CHEK2, BRSK1, MAPK14 AND MARK3 modification is found at serine 220. The Rhodanese domain maps to 325-432; the sequence is LIEKFYIIDC…FFPEYMELCE (108 aa). Cysteine 381 is a catalytic residue. Serine 476 is modified (phosphoserine).

Belongs to the MPI phosphatase family. Interacts with MAPK14 and 14-3-3 proteins. When phosphorylated on Ser-130 and/or Thr-131, interacts with PLK1. Interacts with MARK3/C-TAK1. Phosphorylated by CHEK1 and MAPK14 at Ser-220. This phosphorylation creates a binding site for 14-3-3 protein and inhibits the phosphatase. Phosphorylated by PLK4. Phosphorylated by PLK1, leading to activate the phosphatase activity. Phosphorylation by PLK3 at Ser-192 promotes nuclear translocation. Ser-199 is a minor phosphorylation site. Phosphorylation by CDK1 occurs at G2 and G2-M transition and leads to increased activity.

It is found in the nucleus. The catalysed reaction is O-phospho-L-tyrosyl-[protein] + H2O = L-tyrosyl-[protein] + phosphate. Its function is as follows. Functions as a dosage-dependent inducer in mitotic control. Tyrosine protein phosphatase required for progression of the cell cycle. When phosphorylated, highly effective in activating G2 cells into prophase. Directly dephosphorylates CDK1 and activates its kinase activity. The polypeptide is M-phase inducer phosphatase 3 (CDC25C) (Bos taurus (Bovine)).